Reading from the N-terminus, the 540-residue chain is Glucose-6-phosphate isomerase (540 aa).

Residue glutamate 350 is the Proton donor of the active site. Residues histidine 381 and lysine 503 contribute to the active site.

This sequence belongs to the GPI family.

The protein resides in the cytoplasm. The catalysed reaction is alpha-D-glucose 6-phosphate = beta-D-fructose 6-phosphate. The protein operates within carbohydrate biosynthesis; gluconeogenesis. Its pathway is carbohydrate degradation; glycolysis; D-glyceraldehyde 3-phosphate and glycerone phosphate from D-glucose: step 2/4. In terms of biological role, catalyzes the reversible isomerization of glucose-6-phosphate to fructose-6-phosphate. This Burkholderia ambifaria (strain MC40-6) protein is Glucose-6-phosphate isomerase.